Here is a 486-residue protein sequence, read N- to C-terminus: Hexokinase-2 (486 aa).

Phosphoserine is present on serine 15. The Hexokinase domain maps to 21-469 (KELMQQIENF…SGAGAAVIAA (449 aa)). Threonine 38 carries the phosphothreonine modification. A hexokinase small subdomain region spans residues 75-209 (TGKESGDFLA…NIPIEVVALI (135 aa)). Residues 86–91 (DLGGTN) and lysine 111 contribute to the ATP site. Serine 158 carries the phosphoserine modification. Substrate-binding positions include serine 158, 175 to 176 (TK), 210 to 211 (ND), and asparagine 237. Residues 210-458 (NDTTGTLVAS…YPIKIVPAED (249 aa)) form a hexokinase large subdomain region. Phosphoserine is present on serine 245. A substrate-binding site is contributed by glutamate 269. Serine 272 carries the post-translational modification Phosphoserine. Residue glutamate 302 participates in substrate binding. ATP is bound by residues 307–308 (GY), 344–348 (TSYPA), and 419–423 (SVYNR).

This sequence belongs to the hexokinase family. In terms of assembly, homodimer.

The enzyme catalyses a D-hexose + ATP = a D-hexose 6-phosphate + ADP + H(+). The catalysed reaction is D-fructose + ATP = D-fructose 6-phosphate + ADP + H(+). It carries out the reaction D-glucose + ATP = D-glucose 6-phosphate + ADP + H(+). It participates in carbohydrate metabolism; hexose metabolism. The protein operates within carbohydrate degradation; glycolysis; D-glyceraldehyde 3-phosphate and glycerone phosphate from D-glucose: step 1/4. Its activity is regulated as follows. Subject to allosteric control. Substrate inhibition by ATP. Its function is as follows. Catalyzes the phosphorylation of hexose, such as D-glucose and D-fructose, to hexose 6-phosphate (D-glucose 6-phosphate and D-fructose 6-phosphate, respectively). Mediates the initial step of glycolysis by catalyzing phosphorylation of D-glucose to D-glucose 6-phosphate. The protein is Hexokinase-2 (HXK2) of Saccharomyces cerevisiae (strain ATCC 204508 / S288c) (Baker's yeast).